Here is a 300-residue protein sequence, read N- to C-terminus: Acetylglutamate kinase (300 aa).

Residues 68–69 (GG), Arg90, and Asn195 contribute to the substrate site.

The protein belongs to the acetylglutamate kinase family. ArgB subfamily.

It localises to the cytoplasm. The enzyme catalyses N-acetyl-L-glutamate + ATP = N-acetyl-L-glutamyl 5-phosphate + ADP. It functions in the pathway amino-acid biosynthesis; L-arginine biosynthesis; N(2)-acetyl-L-ornithine from L-glutamate: step 2/4. Catalyzes the ATP-dependent phosphorylation of N-acetyl-L-glutamate. The sequence is that of Acetylglutamate kinase from Azotobacter vinelandii (strain DJ / ATCC BAA-1303).